A 490-amino-acid polypeptide reads, in one-letter code: COP9 signalosome complex subunit 2 (490 aa).

The segment covering 1–30 (MSDDDFMQDSDQEYDFEYEDDEEEDTGDVD) has biased composition (acidic residues). Positions 1–32 (MSDDDFMQDSDQEYDFEYEDDEEEDTGDVDIE) are disordered. In terms of domain architecture, PCI spans 250–418 (SEENWKEAQS…GVLELESRED (169 aa)). Residues 469-490 (DTMRSMGSGKRGRRVGLTQRAY) form a disordered region.

Belongs to the CSN2 family. Component of the COP9 signalosome (CSN) complex.

Its subcellular location is the cytoplasm. The protein resides in the nucleus. In terms of biological role, component of the COP9 signalosome (CSN) complex that acts as an regulator of the ubiquitin (Ubl) conjugation pathway by mediating the deneddylation of the cullin subunit of SCF-type E3 ubiquitin-protein ligase complexes. The CSN complex is involved in the regulation of the circadian clock through its control of the stability of the SCF(FWD-1) complex. In Neurospora crassa (strain ATCC 24698 / 74-OR23-1A / CBS 708.71 / DSM 1257 / FGSC 987), this protein is COP9 signalosome complex subunit 2 (csn-2).